Reading from the N-terminus, the 852-residue chain is Disks large homolog 2 (852 aa).

2 S-palmitoyl cysteine lipidation sites follow: Cys5 and Cys7. Ser28 is modified (phosphoserine). The residue at position 58 (Tyr58) is a Phosphotyrosine. Ser65 is subject to Phosphoserine. PDZ domains follow at residues 98-185 (EITL…RRRR) and 193-280 (EIKL…GKPT). Ser307, Ser328, Ser360, Ser365, Ser406, and Ser414 each carry phosphoserine. The PDZ 3 domain occupies 421–502 (KVVLHKGSTG…TVTIIAQYQP (82 aa)). Tyr505 bears the Phosphotyrosine mark. A phosphoserine mark is found at Ser528, Ser530, and Ser553. In terms of domain architecture, SH3 spans 536 to 606 (KRSLYVRAMF…PSKRRVERKE (71 aa)). The 176-residue stretch at 662–837 (TRPVIILGPM…IYNQCKLVIE (176 aa)) folds into the Guanylate kinase-like domain. Phosphotyrosine occurs at positions 732 and 737.

Interacts with NOS1/nNOS through second PDZ domain. Interacts with KCNJ2/Kir2.1 (via C-terminus) through one of its PDZ domains. Interacts with KCNJ4. Interacts with FRMPD4 (via C-terminus). Interacts through its PDZ domains with NETO1. Interacts with LRFN1, LRFN2 and LRFN4. Interacts with FASLG. Interacts with KCNJ4. Interacts with ADAM22. Interacts with DGKI (via PDZ-binding motif). In terms of processing, palmitoylation of isoform 1 and isoform 2 is not required for targeting to postsynaptic density. Brain. Highest levels of isoform 1 in cortex, olfactory bulb, thalamus, hypothalamus, striatum and hippocampus. Highest level of isoform 2 in olfactory bulb. Reduced levels in cortex and hippocampus. Highest level of isoform 4 in spinal cord. Low levels of isoform 4, isoform 6, and isoform 7 in superior cervical ganglion.

It is found in the cell membrane. The protein resides in the postsynaptic density. Its subcellular location is the synapse. It localises to the membrane. The protein localises to the cell projection. It is found in the axon. The protein resides in the perikaryon. Required for perception of chronic pain through NMDA receptor signaling. Regulates surface expression of NMDA receptors in dorsal horn neurons of the spinal cord. Interacts with the cytoplasmic tail of NMDA receptor subunits as well as inward rectifying potassium channels. Involved in regulation of synaptic stability at cholinergic synapses. Part of the postsynaptic protein scaffold of excitatory synapses. In Mus musculus (Mouse), this protein is Disks large homolog 2 (Dlg2).